Here is a 284-residue protein sequence, read N- to C-terminus: Tryptophan 2,3-dioxygenase (284 aa).

Substrate-binding positions include 51–55 (FIIQH), Tyr-113, and Arg-117. His-240 is a heme binding site. Position 254 (Thr-254) interacts with substrate.

This sequence belongs to the tryptophan 2,3-dioxygenase family. As to quaternary structure, homotetramer. Heme is required as a cofactor.

The catalysed reaction is L-tryptophan + O2 = N-formyl-L-kynurenine. It participates in amino-acid degradation; L-tryptophan degradation via kynurenine pathway; L-kynurenine from L-tryptophan: step 1/2. Heme-dependent dioxygenase that catalyzes the oxidative cleavage of the L-tryptophan (L-Trp) pyrrole ring and converts L-tryptophan to N-formyl-L-kynurenine. Catalyzes the oxidative cleavage of the indole moiety. The chain is Tryptophan 2,3-dioxygenase from Arthrobacter sp. (strain FB24).